Here is a 111-residue protein sequence, read N- to C-terminus: Putative pterin-4-alpha-carbinolamine dehydratase (111 aa).

This sequence belongs to the pterin-4-alpha-carbinolamine dehydratase family.

The catalysed reaction is (4aS,6R)-4a-hydroxy-L-erythro-5,6,7,8-tetrahydrobiopterin = (6R)-L-erythro-6,7-dihydrobiopterin + H2O. The protein is Putative pterin-4-alpha-carbinolamine dehydratase of Marinobacter nauticus (strain ATCC 700491 / DSM 11845 / VT8) (Marinobacter aquaeolei).